A 135-amino-acid polypeptide reads, in one-letter code: Galectin-1 (135 aa).

Alanine 2 carries the N-acetylalanine modification. A Galectin domain is found at 4–135 (GLVASNLNLK…DFKIKCVAFD (132 aa)). N6-acetyllysine is present on residues lysine 13 and lysine 29. Serine 30 is subject to Phosphoserine; by FAM20C. A beta-D-galactoside is bound by residues 45-49 (HFNPR), histidine 53, asparagine 62, and 69-72 (WGTE). The residue at position 108 (lysine 108) is an N6-acetyllysine; alternate. Lysine 108 bears the N6-succinyllysine; alternate mark. Position 128 is an N6-acetyllysine (lysine 128).

As to quaternary structure, homodimer. Binds LGALS3BP. Interacts with CD2, CD3, CD4, CD6, CD7, CD43, ALCAM and CD45. Interacts with laminin (via poly-N-acetyllactosamine). Interacts with SUSD2. Interacts with cargo receptor TMED10; the interaction mediates the translocation from the cytoplasm into the ERGIC (endoplasmic reticulum-Golgi intermediate compartment) and thereby secretion. Interacts with CD69. Expressed in placenta, maternal decidua and fetal membranes. Within placenta, expressed in trophoblasts, stromal cells, villous endothelium, syncytiotrophoblast apical membrane and villous stroma. Within fetal membranes, expressed in amnion, chorioamniotic mesenchyma and chorion (at protein level). Expressed in cardiac, smooth, and skeletal muscle, neurons, thymus, kidney and hematopoietic cells.

The protein resides in the secreted. It is found in the extracellular space. The protein localises to the extracellular matrix. Its subcellular location is the cytoplasm. Lectin that binds beta-galactoside and a wide array of complex carbohydrates. Plays a role in regulating apoptosis, cell proliferation and cell differentiation. Inhibits CD45 protein phosphatase activity and therefore the dephosphorylation of Lyn kinase. Strong inducer of T-cell apoptosis. Plays a negative role in Th17 cell differentiation via activation of the receptor CD69. The polypeptide is Galectin-1 (Homo sapiens (Human)).